Here is a 339-residue protein sequence, read N- to C-terminus: Large ribosomal subunit protein uL10 (339 aa).

The interval 307 to 339 (VEEEKKEEKVEEEKEDEEASEEEALAGLSALFG) is disordered. Over residues 308–318 (EEEKKEEKVEE) the composition is skewed to basic and acidic residues. Acidic residues predominate over residues 319–330 (EKEDEEASEEEA).

It belongs to the universal ribosomal protein uL10 family. In terms of assembly, part of the 50S ribosomal subunit. Forms part of the ribosomal stalk which helps the ribosome interact with GTP-bound translation factors. Forms a heptameric L10(L12)2(L12)2(L12)2 complex, where L10 forms an elongated spine to which the L12 dimers bind in a sequential fashion.

In terms of biological role, forms part of the ribosomal stalk, playing a central role in the interaction of the ribosome with GTP-bound translation factors. In Pyrococcus furiosus (strain ATCC 43587 / DSM 3638 / JCM 8422 / Vc1), this protein is Large ribosomal subunit protein uL10.